We begin with the raw amino-acid sequence, 122 residues long: Holo-[acyl-carrier-protein] synthase (122 aa).

Mg(2+)-binding residues include Asp8 and Glu56.

Belongs to the P-Pant transferase superfamily. AcpS family. The cofactor is Mg(2+).

It localises to the cytoplasm. The catalysed reaction is apo-[ACP] + CoA = holo-[ACP] + adenosine 3',5'-bisphosphate + H(+). Its function is as follows. Transfers the 4'-phosphopantetheine moiety from coenzyme A to a Ser of acyl-carrier-protein. The chain is Holo-[acyl-carrier-protein] synthase from Streptomyces griseus subsp. griseus (strain JCM 4626 / CBS 651.72 / NBRC 13350 / KCC S-0626 / ISP 5235).